The chain runs to 484 residues: UDP-N-acetylmuramate--L-alanine ligase (484 aa).

126-132 contributes to the ATP binding site; the sequence is GTHGKTT.

This sequence belongs to the MurCDEF family.

The protein localises to the cytoplasm. It carries out the reaction UDP-N-acetyl-alpha-D-muramate + L-alanine + ATP = UDP-N-acetyl-alpha-D-muramoyl-L-alanine + ADP + phosphate + H(+). It functions in the pathway cell wall biogenesis; peptidoglycan biosynthesis. Its function is as follows. Cell wall formation. The protein is UDP-N-acetylmuramate--L-alanine ligase of Tolumonas auensis (strain DSM 9187 / NBRC 110442 / TA 4).